A 904-amino-acid polypeptide reads, in one-letter code: Protein translocase subunit SecA (904 aa).

ATP-binding positions include glutamine 89, glycine 107–threonine 111, and aspartate 502. Zn(2+) is bound by residues cysteine 888, cysteine 890, cysteine 899, and histidine 900.

It belongs to the SecA family. As to quaternary structure, monomer and homodimer. Part of the essential Sec protein translocation apparatus which comprises SecA, SecYEG and auxiliary proteins SecDF-YajC and YidC. Zn(2+) is required as a cofactor.

Its subcellular location is the cell inner membrane. It localises to the cytoplasm. The enzyme catalyses ATP + H2O + cellular proteinSide 1 = ADP + phosphate + cellular proteinSide 2.. In terms of biological role, part of the Sec protein translocase complex. Interacts with the SecYEG preprotein conducting channel. Has a central role in coupling the hydrolysis of ATP to the transfer of proteins into and across the cell membrane, serving both as a receptor for the preprotein-SecB complex and as an ATP-driven molecular motor driving the stepwise translocation of polypeptide chains across the membrane. The polypeptide is Protein translocase subunit SecA (Roseobacter denitrificans (strain ATCC 33942 / OCh 114) (Erythrobacter sp. (strain OCh 114))).